Consider the following 747-residue polypeptide: Beta-glucosidase BoGH3A (747 aa).

Residues 1–26 form the signal peptide; it reads MIIGIMKTFLLTICFLSVQTGMVAIA. Aspartate 273 is a catalytic residue.

Belongs to the glycosyl hydrolase 3 family.

The protein resides in the periplasm. The catalysed reaction is Hydrolysis of terminal, non-reducing beta-D-glucosyl residues with release of beta-D-glucose.. It functions in the pathway glucan metabolism; xyloglucan degradation. Its function is as follows. Catalyzes the hydrolysis of terminal, non-reducing beta-D-glucosyl residues with release of beta-D-glucose in xyloglucan degradation, leading to remove the backbone 'G' units. The chain is Beta-glucosidase BoGH3A from Bacteroides ovatus (strain ATCC 8483 / DSM 1896 / JCM 5824 / BCRC 10623 / CCUG 4943 / NCTC 11153).